Consider the following 195-residue polypeptide: MKEIVIASNNQGKINDFKVIFPDYHVIGISELILDFDVEETGSTFEENAILKSEAAAKALNKTVIADDSGLEVFALNGEPGIYSARYAGENKSDEANIEKLLNKLGNTTDRRAQFVCVISMSGPDMETKVFKGTVSGEIADGKYGENGFGYDPIFYVPKLDRTMAQLSKEQKGQISHRRNAINLLEAYLAGDQNV.

8–13 is a binding site for substrate; that stretch reads SNNQGK. Positions 39 and 68 each coordinate Mg(2+). The active-site Proton acceptor is Asp68. Residues Ser69, 149–152, Lys172, and 177–178 contribute to the substrate site; these read FGYD and HR.

This sequence belongs to the HAM1 NTPase family. Homodimer. It depends on Mg(2+) as a cofactor.

It catalyses the reaction XTP + H2O = XMP + diphosphate + H(+). The enzyme catalyses dITP + H2O = dIMP + diphosphate + H(+). The catalysed reaction is ITP + H2O = IMP + diphosphate + H(+). Functionally, pyrophosphatase that catalyzes the hydrolysis of nucleoside triphosphates to their monophosphate derivatives, with a high preference for the non-canonical purine nucleotides XTP (xanthosine triphosphate), dITP (deoxyinosine triphosphate) and ITP. Seems to function as a house-cleaning enzyme that removes non-canonical purine nucleotides from the nucleotide pool, thus preventing their incorporation into DNA/RNA and avoiding chromosomal lesions. This Staphylococcus aureus (strain MRSA252) protein is dITP/XTP pyrophosphatase.